The sequence spans 162 residues: 2-C-methyl-D-erythritol 2,4-cyclodiphosphate synthase (162 aa).

A divalent metal cation contacts are provided by aspartate 9 and histidine 11. 4-CDP-2-C-methyl-D-erythritol 2-phosphate-binding positions include 9-11 and 35-36; these read DVH and HS. Histidine 43 provides a ligand contact to a divalent metal cation. 4-CDP-2-C-methyl-D-erythritol 2-phosphate-binding positions include 57–59, 62–66, 133–136, phenylalanine 140, and arginine 143; these read DIG, FPDTD, and TTTE.

This sequence belongs to the IspF family. Homotrimer. Requires a divalent metal cation as cofactor.

The enzyme catalyses 4-CDP-2-C-methyl-D-erythritol 2-phosphate = 2-C-methyl-D-erythritol 2,4-cyclic diphosphate + CMP. Its pathway is isoprenoid biosynthesis; isopentenyl diphosphate biosynthesis via DXP pathway; isopentenyl diphosphate from 1-deoxy-D-xylulose 5-phosphate: step 4/6. Functionally, involved in the biosynthesis of isopentenyl diphosphate (IPP) and dimethylallyl diphosphate (DMAPP), two major building blocks of isoprenoid compounds. Catalyzes the conversion of 4-diphosphocytidyl-2-C-methyl-D-erythritol 2-phosphate (CDP-ME2P) to 2-C-methyl-D-erythritol 2,4-cyclodiphosphate (ME-CPP) with a corresponding release of cytidine 5-monophosphate (CMP). This is 2-C-methyl-D-erythritol 2,4-cyclodiphosphate synthase from Histophilus somni (strain 129Pt) (Haemophilus somnus).